The sequence spans 229 residues: Urease accessory protein UreF (229 aa).

Belongs to the UreF family. UreD, UreF and UreG form a complex that acts as a GTP-hydrolysis-dependent molecular chaperone, activating the urease apoprotein by helping to assemble the nickel containing metallocenter of UreC. The UreE protein probably delivers the nickel.

Its subcellular location is the cytoplasm. In terms of biological role, required for maturation of urease via the functional incorporation of the urease nickel metallocenter. The polypeptide is Urease accessory protein UreF (Staphylococcus epidermidis (strain ATCC 12228 / FDA PCI 1200)).